The following is a 264-amino-acid chain: 3-methyl-2-oxobutanoate hydroxymethyltransferase (264 aa).

Positions 45 and 84 each coordinate Mg(2+). 3-methyl-2-oxobutanoate contacts are provided by residues 45 to 46 (DS), aspartate 84, and lysine 112. Glutamate 114 is a Mg(2+) binding site. The Proton acceptor role is filled by glutamate 181.

This sequence belongs to the PanB family. As to quaternary structure, homodecamer; pentamer of dimers. It depends on Mg(2+) as a cofactor.

It localises to the cytoplasm. It carries out the reaction 3-methyl-2-oxobutanoate + (6R)-5,10-methylene-5,6,7,8-tetrahydrofolate + H2O = 2-dehydropantoate + (6S)-5,6,7,8-tetrahydrofolate. Its pathway is cofactor biosynthesis; (R)-pantothenate biosynthesis; (R)-pantoate from 3-methyl-2-oxobutanoate: step 1/2. Its function is as follows. Catalyzes the reversible reaction in which hydroxymethyl group from 5,10-methylenetetrahydrofolate is transferred onto alpha-ketoisovalerate to form ketopantoate. The polypeptide is 3-methyl-2-oxobutanoate hydroxymethyltransferase (Vibrio parahaemolyticus serotype O3:K6 (strain RIMD 2210633)).